A 321-amino-acid chain; its full sequence is Phospho-N-acetylmuramoyl-pentapeptide-transferase (321 aa).

A run of 10 helical transmembrane segments spans residues 4-24 (MVWA…WLIP), 51-71 (TMGG…TVGF), 75-95 (SGVL…DDYI), 109-129 (QKFT…VYGI), 139-159 (GFEV…LLIV), 173-193 (GLAA…ASAG), 195-215 (SDVT…FLFF), 222-242 (MFMG…LALL), 247-267 (LILP…ILQV), and 297-317 (VVYT…LLAM).

The protein belongs to the glycosyltransferase 4 family. MraY subfamily. Mg(2+) serves as cofactor.

It is found in the cell membrane. It catalyses the reaction UDP-N-acetyl-alpha-D-muramoyl-L-alanyl-gamma-D-glutamyl-meso-2,6-diaminopimeloyl-D-alanyl-D-alanine + di-trans,octa-cis-undecaprenyl phosphate = di-trans,octa-cis-undecaprenyl diphospho-N-acetyl-alpha-D-muramoyl-L-alanyl-D-glutamyl-meso-2,6-diaminopimeloyl-D-alanyl-D-alanine + UMP. The protein operates within cell wall biogenesis; peptidoglycan biosynthesis. Its function is as follows. Catalyzes the initial step of the lipid cycle reactions in the biosynthesis of the cell wall peptidoglycan: transfers peptidoglycan precursor phospho-MurNAc-pentapeptide from UDP-MurNAc-pentapeptide onto the lipid carrier undecaprenyl phosphate, yielding undecaprenyl-pyrophosphoryl-MurNAc-pentapeptide, known as lipid I. This chain is Phospho-N-acetylmuramoyl-pentapeptide-transferase, found in Heliobacterium modesticaldum (strain ATCC 51547 / Ice1).